A 781-amino-acid chain; its full sequence is ATP-dependent RNA helicase rok1 (781 aa).

2 disordered regions span residues 7 to 108 (LSRG…KPKL) and 134 to 177 (QDEA…IYPQ). Residues 48–57 (KRGKKRKRKG) are compositionally biased toward basic residues. Acidic residues predominate over residues 66–75 (SGDEDDDASD). 2 stretches are compositionally biased toward basic and acidic residues: residues 84–108 (TPEE…KPKL) and 139–173 (TEEK…DKKQ). The short motif at 184-212 (ELKYTYGIHPVLADNITRQGFRVPTEVQM) is the Q motif element. The region spanning 233–487 (DVKVEKGIDF…TKHIDKRAKR (255 aa)) is the Helicase ATP-binding domain. 246–253 (APTGSGKT) contacts ATP. Residues 323–386 (ESNEQEETEQ…SRAKGDQKFK (64 aa)) form a disordered region. The segment covering 339 to 369 (QDSDSDSEAESEPEEVMKIDEEEEEEEESDS) has biased composition (acidic residues). Over residues 370 to 386 (DAEKKTESRAKGDQKFK) the composition is skewed to basic and acidic residues. A DEAD box motif is present at residues 434–437 (DEAD). Residues 527–689 (ALRQLLHPVS…GKDIDEKDTV (163 aa)) form the Helicase C-terminal domain. The tract at residues 718 to 781 (RGVESRRTGG…KAEEEWTGLD (64 aa)) is disordered. The segment covering 736–752 (SWERRRENNRREAIEAS) has biased composition (basic and acidic residues).

Belongs to the DEAD box helicase family. DDX52/ROK1 subfamily. Interacts with the U3 snoRNA and is associated with the 90S and 40S pre-ribosomes.

It is found in the nucleus. The protein resides in the nucleolus. It catalyses the reaction ATP + H2O = ADP + phosphate + H(+). Its function is as follows. ATP-dependent RNA helicase involved in 40S ribosomal subunit biogenesis. Required for the processing and cleavage of 35S pre-rRNA at sites A0, A1, and A2, leading to mature 18S rRNA. The chain is ATP-dependent RNA helicase rok1 (drh-16) from Neurospora crassa (strain ATCC 24698 / 74-OR23-1A / CBS 708.71 / DSM 1257 / FGSC 987).